A 325-amino-acid chain; its full sequence is Methionyl-tRNA formyltransferase (325 aa).

(6S)-5,6,7,8-tetrahydrofolate is bound at residue 113–116 (SLLP).

This sequence belongs to the Fmt family.

It catalyses the reaction L-methionyl-tRNA(fMet) + (6R)-10-formyltetrahydrofolate = N-formyl-L-methionyl-tRNA(fMet) + (6S)-5,6,7,8-tetrahydrofolate + H(+). In terms of biological role, attaches a formyl group to the free amino group of methionyl-tRNA(fMet). The formyl group appears to play a dual role in the initiator identity of N-formylmethionyl-tRNA by promoting its recognition by IF2 and preventing the misappropriation of this tRNA by the elongation apparatus. The sequence is that of Methionyl-tRNA formyltransferase from Chromohalobacter salexigens (strain ATCC BAA-138 / DSM 3043 / CIP 106854 / NCIMB 13768 / 1H11).